The following is a 281-amino-acid chain: Pantothenate synthetase (281 aa).

Residue 30–37 participates in ATP binding; that stretch reads MGNLHQGH. The active-site Proton donor is His37. Residue Gln61 participates in (R)-pantoate binding. A beta-alanine-binding site is contributed by Gln61. 149–152 is a binding site for ATP; it reads GNKD. Position 155 (Gln155) interacts with (R)-pantoate. ATP-binding positions include Ile178 and 186 to 189; that span reads MSSR.

Belongs to the pantothenate synthetase family. Homodimer.

The protein localises to the cytoplasm. It catalyses the reaction (R)-pantoate + beta-alanine + ATP = (R)-pantothenate + AMP + diphosphate + H(+). The protein operates within cofactor biosynthesis; (R)-pantothenate biosynthesis; (R)-pantothenate from (R)-pantoate and beta-alanine: step 1/1. Catalyzes the condensation of pantoate with beta-alanine in an ATP-dependent reaction via a pantoyl-adenylate intermediate. In Shewanella oneidensis (strain ATCC 700550 / JCM 31522 / CIP 106686 / LMG 19005 / NCIMB 14063 / MR-1), this protein is Pantothenate synthetase.